We begin with the raw amino-acid sequence, 190 residues long: Histone-arginine methyltransferase METTL23 (190 aa).

The protein belongs to the methyltransferase superfamily. METTL23 family. Interacts with HSPA5, HSP90B1, TUBULIN, UGGT1 and UGGT2. Interacts with TET3. Interacts with STPG4.

It localises to the nucleus. The protein resides in the cytoplasm. The enzyme catalyses L-arginyl-[protein] + 2 S-adenosyl-L-methionine = N(omega),N(omega)-dimethyl-L-arginyl-[protein] + 2 S-adenosyl-L-homocysteine + 2 H(+). Histone methyltransferase that dimethylates histone H3 at 'Arg-17', forming asymmetric dimethylarginine (H3R17me2a), leading to activate transcription via chromatin remodeling. Maternal factor involved in epigenetic chromatin reprogramming of the paternal genome in the zygote: mediates H3R17me2a, promoting histone H3.3 incorporation in the male pronucleus, leading to TET3 recruitment and subsequent DNA demethylation. This Homo sapiens (Human) protein is Histone-arginine methyltransferase METTL23.